The chain runs to 60 residues: Metallothionein A (60 aa).

The segment at 1-28 (MDPCECSKTGKCNCGTSCTCTNCSCKCC) is beta. Residues Cys-4, Cys-6, Cys-12, Cys-14, Cys-18, Cys-20, Cys-23, Cys-25, Cys-28, Cys-32, Cys-33, Cys-35, Cys-36, Cys-40, Cys-43, Cys-47, Cys-49, Cys-54, Cys-58, and Cys-59 each coordinate a divalent metal cation. An alpha region spans residues 29–60 (KKSCCSCCPSGCSKCASGCVCKGNSCDKSCCQ).

This sequence belongs to the metallothionein superfamily. Type 1 family.

Metallothioneins have a high content of cysteine residues that bind various heavy metals. The sequence is that of Metallothionein A (mta) from Cyprinodon sp. (Pupfish).